A 649-amino-acid chain; its full sequence is WEB family protein At5g55860 (649 aa).

Coiled coils occupy residues 59-227 (EKVL…ACSQ), 267-356 (EFAK…IESV), and 391-461 (TINQ…MSEK). Over residues 443-453 (EAKAAETKALE) the composition is skewed to basic and acidic residues. The segment at 443–483 (EAKAAETKALEQIKSMSEKTNAARNSTSSESGSQSITLSQE) is disordered. Over residues 456–467 (KSMSEKTNAARN) the composition is skewed to polar residues. Over residues 468 to 482 (STSSESGSQSITLSQ) the composition is skewed to low complexity. Residues 505–549 (AALAQVEAVRASENETLKKLETTQEEIKKLKTATEEALKKAAMAD) adopt a coiled-coil conformation. The disordered stretch occupies residues 583 to 611 (MKMASESSPQQHYKAPKQKPVNNKLEKTK).

It belongs to the WEB family.

The polypeptide is WEB family protein At5g55860 (Arabidopsis thaliana (Mouse-ear cress)).